A 307-amino-acid polypeptide reads, in one-letter code: Glycerol-3-phosphate dehydrogenase [NAD(P)+] (307 aa).

Tryptophan 14, arginine 34, arginine 35, and lysine 82 together coordinate NADPH. Lysine 82 and glycine 110 together coordinate sn-glycerol 3-phosphate. Serine 114 lines the NADPH pocket. Residues lysine 165, aspartate 218, serine 228, arginine 229, and asparagine 230 each coordinate sn-glycerol 3-phosphate. The active-site Proton acceptor is lysine 165. Arginine 229 is an NADPH binding site. Glutamate 255 serves as a coordination point for NADPH.

It belongs to the NAD-dependent glycerol-3-phosphate dehydrogenase family.

The protein localises to the cytoplasm. It catalyses the reaction sn-glycerol 3-phosphate + NAD(+) = dihydroxyacetone phosphate + NADH + H(+). It carries out the reaction sn-glycerol 3-phosphate + NADP(+) = dihydroxyacetone phosphate + NADPH + H(+). The protein operates within membrane lipid metabolism; glycerophospholipid metabolism. Its function is as follows. Catalyzes the reduction of the glycolytic intermediate dihydroxyacetone phosphate (DHAP) to sn-glycerol 3-phosphate (G3P), the key precursor for phospholipid synthesis. This is Glycerol-3-phosphate dehydrogenase [NAD(P)+] from Trichormus variabilis (strain ATCC 29413 / PCC 7937) (Anabaena variabilis).